The chain runs to 196 residues: ATP-dependent Clp protease proteolytic subunit (196 aa).

Ser-98 acts as the Nucleophile in catalysis. His-123 is a catalytic residue.

The protein belongs to the peptidase S14 family. As to quaternary structure, fourteen ClpP subunits assemble into 2 heptameric rings which stack back to back to give a disk-like structure with a central cavity, resembling the structure of eukaryotic proteasomes.

The protein resides in the cytoplasm. The enzyme catalyses Hydrolysis of proteins to small peptides in the presence of ATP and magnesium. alpha-casein is the usual test substrate. In the absence of ATP, only oligopeptides shorter than five residues are hydrolyzed (such as succinyl-Leu-Tyr-|-NHMec, and Leu-Tyr-Leu-|-Tyr-Trp, in which cleavage of the -Tyr-|-Leu- and -Tyr-|-Trp bonds also occurs).. Functionally, cleaves peptides in various proteins in a process that requires ATP hydrolysis. Has a chymotrypsin-like activity. Plays a major role in the degradation of misfolded proteins. The polypeptide is ATP-dependent Clp protease proteolytic subunit (Limosilactobacillus fermentum (strain NBRC 3956 / LMG 18251) (Lactobacillus fermentum)).